Reading from the N-terminus, the 661-residue chain is Putative core protein L410 (661 aa).

Residues 1–11 (MADNKGRRDTF) are compositionally biased toward basic and acidic residues. The disordered stretch occupies residues 1–26 (MADNKGRRDTFDVSGDTNTNATSNKR). The segment covering 15-25 (GDTNTNATSNK) has biased composition (polar residues). The stretch at 112-140 (KKENKWSDKEYDEFRKELTNLLTGNRALE) forms a coiled coil.

It localises to the virion. This is Putative core protein L410 from Acanthamoeba polyphaga (Amoeba).